Reading from the N-terminus, the 878-residue chain is RNA-directed RNA polymerase (878 aa).

Glycine 258–threonine 265 serves as a coordination point for GTP. The region spanning leucine 397 to alanine 597 is the RdRp catalytic domain. The tract at residues glycine 845–glutamine 878 is disordered.

As to quaternary structure, interacts with VP3 in the cytoplasm. In terms of processing, may exist in multiple phosphorylated forms.

It is found in the virion. The catalysed reaction is RNA(n) + a ribonucleoside 5'-triphosphate = RNA(n+1) + diphosphate. RNA-dependent RNA polymerase which is found both free and covalently attached to the genomic RNA. May also contain guanylyl and methyl transferase activities. The chain is RNA-directed RNA polymerase (VP1) from Gallus gallus (Chicken).